A 102-amino-acid polypeptide reads, in one-letter code: RNA-binding protein Hfq (102 aa).

The region spanning 9–68 is the Sm domain; the sequence is DPFLNALRRERVPVSIYLVNGIKLQGQIESFDQFVILLKNTVSQMVYKHAISTVVPSRPV. The tract at residues 63 to 102 is disordered; the sequence is VPSRPVSHHSNNAGGGSSNYHHGGSAQGSSAPQQDSDDAE. Residues 70–86 are compositionally biased toward low complexity; sequence HHSNNAGGGSSNYHHGG.

This sequence belongs to the Hfq family. In terms of assembly, homohexamer.

RNA chaperone that binds small regulatory RNA (sRNAs) and mRNAs to facilitate mRNA translational regulation in response to envelope stress, environmental stress and changes in metabolite concentrations. Also binds with high specificity to tRNAs. The protein is RNA-binding protein Hfq of Klebsiella pneumoniae (strain 342).